Here is a 189-residue protein sequence, read N- to C-terminus: Segregation and condensation protein B (189 aa).

It belongs to the ScpB family. Homodimer. Homodimerization may be required to stabilize the binding of ScpA to the Smc head domains. Component of a cohesin-like complex composed of ScpA, ScpB and the Smc homodimer, in which ScpA and ScpB bind to the head domain of Smc. The presence of the three proteins is required for the association of the complex with DNA.

It is found in the cytoplasm. Participates in chromosomal partition during cell division. May act via the formation of a condensin-like complex containing Smc and ScpA that pull DNA away from mid-cell into both cell halves. The sequence is that of Segregation and condensation protein B from Streptococcus mitis.